A 268-amino-acid chain; its full sequence is Imidazole glycerol phosphate synthase subunit HisF (268 aa).

Active-site residues include Asp12 and Asp131.

Belongs to the HisA/HisF family. As to quaternary structure, heterodimer of HisH and HisF.

The protein resides in the cytoplasm. It catalyses the reaction 5-[(5-phospho-1-deoxy-D-ribulos-1-ylimino)methylamino]-1-(5-phospho-beta-D-ribosyl)imidazole-4-carboxamide + L-glutamine = D-erythro-1-(imidazol-4-yl)glycerol 3-phosphate + 5-amino-1-(5-phospho-beta-D-ribosyl)imidazole-4-carboxamide + L-glutamate + H(+). It participates in amino-acid biosynthesis; L-histidine biosynthesis; L-histidine from 5-phospho-alpha-D-ribose 1-diphosphate: step 5/9. Its function is as follows. IGPS catalyzes the conversion of PRFAR and glutamine to IGP, AICAR and glutamate. The HisF subunit catalyzes the cyclization activity that produces IGP and AICAR from PRFAR using the ammonia provided by the HisH subunit. The chain is Imidazole glycerol phosphate synthase subunit HisF from Methanosphaerula palustris (strain ATCC BAA-1556 / DSM 19958 / E1-9c).